Here is a 286-residue protein sequence, read N- to C-terminus: Orotidine 5'-phosphate decarboxylase (286 aa).

Substrate is bound by residues aspartate 35, 57 to 59 (KTH), 89 to 98 (DRKFADIGNT), tyrosine 239, and arginine 257. Lysine 91 functions as the Proton donor in the catalytic mechanism.

It belongs to the OMP decarboxylase family.

The catalysed reaction is orotidine 5'-phosphate + H(+) = UMP + CO2. Its pathway is pyrimidine metabolism; UMP biosynthesis via de novo pathway; UMP from orotate: step 2/2. The protein is Orotidine 5'-phosphate decarboxylase (URA3) of Yarrowia lipolytica (strain CLIB 122 / E 150) (Yeast).